Consider the following 190-residue polypeptide: MSTTPTYNHPVINERSKRMVWVDLEMTGLDISKDVILEMAIVITDAELNVIEKGPNLVIHRSDEVLKNMNDWCIEHHGKSGLTEDVRNSKISLEEAEKIMLEFVRKHTDKGICPLAGNTVHEDRRFLLKEMPTFAEHLHYRIIDVSTIKELSRRWYPYIPSPKKVCGHRALQDIEESIEELKSYRVTVFK.

In terms of domain architecture, Exonuclease spans 19-181 (MVWVDLEMTG…QDIEESIEEL (163 aa)). The active site involves Tyr-140.

Belongs to the oligoribonuclease family.

Functionally, 3'-to-5' exoribonuclease specific for small oligoribonucleotides. In Dictyostelium discoideum (Social amoeba), this protein is Probable oligoribonuclease (rexo2-1).